Here is a 197-residue protein sequence, read N- to C-terminus: dCTP deaminase, dUMP-forming (197 aa).

DCTP contacts are provided by residues 105–110, D123, 131–133, Q152, Y166, K174, and Q178; these read RSSIGR and TLE. E133 functions as the Proton donor/acceptor in the catalytic mechanism. The tract at residues 161–183 is disordered; sequence PAERPYGHPSRDSKYIGQTRPQT. Positions 165-174 are enriched in basic and acidic residues; sequence PYGHPSRDSK.

This sequence belongs to the dCTP deaminase family. Homotrimer.

The catalysed reaction is dCTP + 2 H2O = dUMP + NH4(+) + diphosphate. It functions in the pathway pyrimidine metabolism; dUMP biosynthesis; dUMP from dCTP: step 1/1. In terms of biological role, bifunctional enzyme that catalyzes both the deamination of dCTP to dUTP and the hydrolysis of dUTP to dUMP without releasing the toxic dUTP intermediate. The protein is dCTP deaminase, dUMP-forming of Methanothermobacter thermautotrophicus (strain ATCC 29096 / DSM 1053 / JCM 10044 / NBRC 100330 / Delta H) (Methanobacterium thermoautotrophicum).